Here is a 703-residue protein sequence, read N- to C-terminus: WD repeat-containing protein pop2 (703 aa).

Polar residues-rich tracts occupy residues M1–P27, E63–S73, and S156–P178. 2 disordered regions span residues M1–S73 and S156–S180. The tract at residues M1–V170 is interaction with pop1. Positions K236–M283 constitute an F-box domain. 6 WD repeats span residues G389–N417, G429–K473, G505–R533, G545–D575, G587–D615, and L625–D654.

In terms of assembly, homodimer and heterodimer with pop1. Binds to cul1, pip1 and phosphorylated cdc18.

It is found in the cytoplasm. It localises to the nucleus. Its function is as follows. Involved in maintenance of ploidy through proteasome dependent degradation of CDK inhibitor rum1 and S-phase initiator cdc18. Functions as a recognition factor for rum1 and cdc18, which are subsequently ubiquitinated and targeted to the 26S proteasome for degradation. Together with pop1, required for cig2 instability during G2 and M phase and cig2 degradation in exponentially growing cells. The polypeptide is WD repeat-containing protein pop2 (pop2) (Schizosaccharomyces pombe (strain 972 / ATCC 24843) (Fission yeast)).